We begin with the raw amino-acid sequence, 443 residues long: Maintenance of mitochondrial morphology protein 1 (443 aa).

The Lumenal portion of the chain corresponds to 1 to 80 (MADLETSDLS…PSNTWSFTQG (80 aa)). Residues 81-101 (LIVGQLSVVFVIVIFIKFFVF) traverse the membrane as a helical segment. The Cytoplasmic segment spans residues 102–443 (AESSPALAKS…NGDKVEDGSN (342 aa)). Disordered stretches follow at residues 126–146 (KKDQSSSDDADPDDDSETTAS) and 304–358 (LSAH…NDGT). The segment covering 131-142 (SSDDADPDDDSE) has biased composition (acidic residues). One can recognise an SMP-LTD domain in the interval 165–417 (SPESLDWFNV…EPRFQVVRLP (253 aa)).

Belongs to the MMM1 family. In terms of assembly, homodimer. Component of the ER-mitochondria encounter structure (ERMES) or MDM complex, composed of MMM1, MDM10, MDM12 and MDM34. An MMM1 homodimer associates with one molecule of MDM12 on each side in a pairwise head-to-tail manner, and the SMP-LTD domains of MMM1 and MDM12 generate a continuous hydrophobic tunnel for phospholipid trafficking.

The protein localises to the endoplasmic reticulum membrane. Its function is as follows. Component of the ERMES/MDM complex, which serves as a molecular tether to connect the endoplasmic reticulum (ER) and mitochondria. Components of this complex are involved in the control of mitochondrial shape and protein biogenesis, and function in nonvesicular lipid trafficking between the ER and mitochondria. The MDM12-MMM1 subcomplex functions in the major beta-barrel assembly pathway that is responsible for biogenesis of all outer membrane beta-barrel proteins, and acts in a late step after the SAM complex. The MDM10-MDM12-MMM1 subcomplex further acts in the TOM40-specific pathway after the action of the MDM12-MMM1 complex. Essential for establishing and maintaining the structure of mitochondria and maintenance of mtDNA nucleoids. The chain is Maintenance of mitochondrial morphology protein 1 from Scheffersomyces stipitis (strain ATCC 58785 / CBS 6054 / NBRC 10063 / NRRL Y-11545) (Yeast).